The sequence spans 580 residues: Lysine--tRNA ligase (580 aa).

Residues 43–51 carry the 'HIGH' region motif; that stretch reads PSGPIHLGN. Positions 178–209 are disordered; that stretch reads KAPAKKSQKPLDEAELEAAEGSGAAAEDDGSS. A compositionally biased stretch (low complexity) spans 196–209; it reads AEGSGAAAEDDGSS. The short motif at 325 to 329 is the 'KMSKS' region element; it reads KMSSS.

This sequence belongs to the class-I aminoacyl-tRNA synthetase family.

The protein resides in the cytoplasm. The enzyme catalyses tRNA(Lys) + L-lysine + ATP = L-lysyl-tRNA(Lys) + AMP + diphosphate. This is Lysine--tRNA ligase (lysS) from Streptomyces coelicolor (strain ATCC BAA-471 / A3(2) / M145).